A 430-amino-acid chain; its full sequence is Lipoyl synthase, mitochondrial (430 aa).

The N-terminal 37 residues, 1–37 (MATSAGKLRTLYSAHSSLSSLPPSARPTLQLATLRSY), are a transit peptide targeting the mitochondrion. Over residues 39 to 55 (TTTPHDSPIGNTSNTPP) the composition is skewed to polar residues. The tract at residues 39-58 (TTTPHDSPIGNTSNTPPTVK) is disordered. The [4Fe-4S] cluster site is built by cysteine 141, cysteine 146, cysteine 152, cysteine 172, cysteine 176, cysteine 179, and serine 387. One can recognise a Radical SAM core domain in the interval 155–376 (GSSKSAATAT…KERALEMGFL (222 aa)).

It belongs to the radical SAM superfamily. Lipoyl synthase family. [4Fe-4S] cluster is required as a cofactor.

Its subcellular location is the mitochondrion. The enzyme catalyses [[Fe-S] cluster scaffold protein carrying a second [4Fe-4S](2+) cluster] + N(6)-octanoyl-L-lysyl-[protein] + 2 oxidized [2Fe-2S]-[ferredoxin] + 2 S-adenosyl-L-methionine + 4 H(+) = [[Fe-S] cluster scaffold protein] + N(6)-[(R)-dihydrolipoyl]-L-lysyl-[protein] + 4 Fe(3+) + 2 hydrogen sulfide + 2 5'-deoxyadenosine + 2 L-methionine + 2 reduced [2Fe-2S]-[ferredoxin]. Its pathway is protein modification; protein lipoylation via endogenous pathway; protein N(6)-(lipoyl)lysine from octanoyl-[acyl-carrier-protein]: step 2/2. Its function is as follows. Catalyzes the radical-mediated insertion of two sulfur atoms into the C-6 and C-8 positions of the octanoyl moiety bound to the lipoyl domains of lipoate-dependent enzymes, thereby converting the octanoylated domains into lipoylated derivatives. The sequence is that of Lipoyl synthase, mitochondrial from Ajellomyces capsulatus (strain G186AR / H82 / ATCC MYA-2454 / RMSCC 2432) (Darling's disease fungus).